Consider the following 259-residue polypeptide: Global transcriptional regulator CodY (259 aa).

A GAF domain region spans residues 1–155; it reads MELLAKTRKL…SSTVVGMEIL (155 aa). The segment at residues 203–222 is a DNA-binding region (H-T-H motif); the sequence is ASKIADRVGITRSVIVNALR. The residue at position 215 (Ser215) is a Phosphoserine.

Belongs to the CodY family.

The protein resides in the cytoplasm. Its function is as follows. DNA-binding global transcriptional regulator which is involved in the adaptive response to starvation and acts by directly or indirectly controlling the expression of numerous genes in response to nutrient availability. During rapid exponential growth, CodY is highly active and represses genes whose products allow adaptation to nutrient depletion. This Bacillus anthracis (strain A0248) protein is Global transcriptional regulator CodY.